A 387-amino-acid polypeptide reads, in one-letter code: Monopolar spindle protein 2 (387 aa).

Residues 157–269 (KNIGKALEVQ…FLKDQIRRER (113 aa)) adopt a coiled-coil conformation. A disordered region spans residues 216-235 (RQVEDNQNSSRTSDPGSPLV). The segment covering 220 to 230 (DNQNSSRTSDP) has biased composition (polar residues). Residues 311–327 (IRIIVCFALLAGVLPYI) form a helical membrane-spanning segment.

The protein belongs to the MPS2 family. In terms of assembly, interacts with BBP1, MPS3, and SPC24.

It is found in the nucleus membrane. It localises to the cytoplasm. The protein resides in the cytoskeleton. Its subcellular location is the microtubule organizing center. The protein localises to the spindle pole body. Its function is as follows. Component of the spindle pole body (SPB) required for insertion of the nascent SPB into the nuclear envelope and for the proper execution of spindle pole body (SPB) duplication. This is Monopolar spindle protein 2 (MPS2) from Saccharomyces cerevisiae (strain FostersB) (Baker's yeast).